An 887-amino-acid polypeptide reads, in one-letter code: Valine--tRNA ligase (887 aa).

The 'HIGH' region motif lies at 47 to 57; sequence PNVTGALHMGH. The short motif at 527-531 is the 'KMSKS' region element; sequence KMSKS. ATP is bound at residue Lys530. Positions 817–885 form a coiled coil; the sequence is LVNVEEEEKR…LLASLEKIRK (69 aa).

Belongs to the class-I aminoacyl-tRNA synthetase family. ValS type 1 subfamily. As to quaternary structure, monomer.

It is found in the cytoplasm. It carries out the reaction tRNA(Val) + L-valine + ATP = L-valyl-tRNA(Val) + AMP + diphosphate. Functionally, catalyzes the attachment of valine to tRNA(Val). As ValRS can inadvertently accommodate and process structurally similar amino acids such as threonine, to avoid such errors, it has a 'posttransfer' editing activity that hydrolyzes mischarged Thr-tRNA(Val) in a tRNA-dependent manner. This Geobacter sulfurreducens (strain ATCC 51573 / DSM 12127 / PCA) protein is Valine--tRNA ligase.